Reading from the N-terminus, the 159-residue chain is Succinate dehydrogenase [ubiquinone] cytochrome b small subunit, mitochondrial (159 aa).

The transit peptide at 1–56 directs the protein to the mitochondrion; that stretch reads MAVLLKLGVLCSGQGARALLLRSRVVRPAYVSAFLQDQPTQGRCGTQHIHLSPSHH. The Mitochondrial matrix segment spans residues 57 to 63; that stretch reads SGSKAAS. Residues 64-85 traverse the membrane as a helical segment; the sequence is LHWTSERVVSVLLLGLIPAGYL. Residues 86-90 lie on the Mitochondrial intermembrane side of the membrane; it reads NPCSV. The helical transmembrane segment at 91–111 threads the bilayer; the sequence is VDYSLAAALTLHSHWGLGQVV. Residue H102 coordinates heme b. Residues 112-120 lie on the Mitochondrial matrix side of the membrane; that stretch reads TDYVHGDTL. Y114 contacts a ubiquinone. The helical transmembrane segment at 121–142 threads the bilayer; the sequence is PKAARAGLLALSALTFAGLCYF. Residues 143-159 are Mitochondrial intermembrane-facing; the sequence is NYHDVGICRAVAMLWKL.

It belongs to the CybS family. As to quaternary structure, component of complex II composed of four subunits: the flavoprotein (FP) SDHA, iron-sulfur protein (IP) SDHB, and a cytochrome b560 composed of SDHC and SDHD.

The protein localises to the mitochondrion inner membrane. It functions in the pathway carbohydrate metabolism; tricarboxylic acid cycle. In terms of biological role, membrane-anchoring subunit of succinate dehydrogenase (SDH) that is involved in complex II of the mitochondrial electron transport chain and is responsible for transferring electrons from succinate to ubiquinone (coenzyme Q). SDH also oxidizes malate to the non-canonical enol form of oxaloacetate, enol-oxaloacetate. Enol-oxaloacetate, which is a potent inhibitor of the succinate dehydrogenase activity, is further isomerized into keto-oxaloacetate. The protein is Succinate dehydrogenase [ubiquinone] cytochrome b small subunit, mitochondrial (Sdhd) of Mus musculus (Mouse).